The following is a 714-amino-acid chain: MNSFMAIALIWMMIACAEADKPLRDPGMTGFQTCKDTLKLPVLEVLPGGGWDNLRNIDMGRVIDLTYTNCKTTEDGQYIIPDEVYTIPQKESNLEMNSEIRDSWVNYQSTTSFSINTELSLFSKVNGKFSTEFQRMKTLQVKDQAVTTRVQVRNRIYTVKNSPTSELSFGFTNALMDICDQLEKNQTKMATYLAELLVLNYGTHVITSVDAGAALVQEDHIRSSFLLDNQNSENTVTASAGIAFLNIVNFKVETDHTSQTLLTKSYLSNRTNSRVQSFGGIPFYPGITLETWQKGITNHLVAIDRAGLPLHFFIKPDKLPGLPGGLVKKLSKTVETAVRHYYTFNTHPGCTNVDSPNFNFQANMEDDSCDAKVTNFTFGGLYQECTELSGDALCQNLEQKNLLTGDFSCPSGYTPVHLLSQTHEEGYSRLECKKKCTLKIFCKTVCEDVFRVAKAQFRAYWCVATGQVPDNSGLLFGGLFTDKSINPMTNAQSCPAGYIPLNLFESLKVCVSLDYELGYKFSVPFGGFFSCIMGNPLVNSDTAKDIGAPSLKKCPGGFSQHLAVISDGCQVSYCVKAGIFTGGSLLPVRLPPYTKPPLMSQVATNTVIVTSSETARSWIKDPQTNQWKLGEPLELHKAMTVIHGDGNGMSGGEAAGVTLGVIIALGIVITLAIYSTRKYKKEKEYQEIEEQESLVGSFATDASPPNGEQDPCPA.

A signal peptide spans Met1 to Ala19. The MACPF domain occupies Gly30–Asn345. A disulfide bond links Cys34 and Cys70. The next 2 membrane-spanning stretches (beta stranded) occupy residues Phe113–Ser120 and Gly127–Glu132. A glycan (N-linked (GlcNAc...) asparagine) is linked at Asn185. The next 2 beta stranded transmembrane spans lie at Thr235–Phe244 and Val248–His256. N-linked (GlcNAc...) asparagine glycosylation occurs at Asn269. Cys350 and Cys369 are disulfide-bonded. A glycan (N-linked (GlcNAc...) asparagine) is linked at Asn375. Intrachain disulfides connect Cys385/Cys394, Cys432/Cys446, Cys436/Cys442, Cys531/Cys569, and Cys554/Cys574. The interval Pro410 to Glu653 is P2. Residues Ala654–Tyr674 traverse the membrane as a helical segment. Residues Glu690–Ala714 are disordered.

This sequence belongs to the MPEG1 family. Homooligomer; predominantly forms a homooligomeric arc-shaped pore complex instead of complete rings of 16 subunits. Proteolytically processed in two steps to generate the Macrophage-expressed gene 1 protein, processed form: cleaved by trypsin in proximity of the helical transmembrane domain releases the ectodomain into the lysosomal lumen to orient the pore-forming domain toward the endogenous membranes, and processed by the asparagine endopeptidase (LGMN). Proteolytic processing in antigen-containing vesicles is pH-dependent. Post-translationally, monoubiquitinated in response to bacterial infection; ubiquitination is required for vesicular localization and antibacterial activity and can be blocked by bacterial cell cycle inhibiting factor (cif).

It localises to the cytoplasmic vesicle membrane. It is found in the cytoplasmic vesicle. The protein resides in the phagosome membrane. Forms arc- and ring-shaped pre-pores on top of the membrane at neutral to slightly acidic pH conditions and converts to pores upon acidification. Undergoes transition from the pre-pore to the pore in a processive clockwise hand-over-hand process. In the pore state, 2 alpha-helical regions refold into transmembrane hairpins (TMH1 and TMH2) in each protomer that form in the ensemble complex giant beta-barrel transmembrane pores. Functionally, pore-forming protein involved in both innate and adaptive immunity. Plays a central role in antigen cross-presentation in dendritic cells by forming a pore in antigen-containing compartments, thereby promoting delivery of antigens for cross-presentation. Also involved in innate immune response following bacterial infection; shows antibacterial activity against a wide spectrum of Gram-positive, Gram-negative and acid-fast bacteria. Reduces the viability of the intracytosolic pathogen L.monocytogenes by inhibiting acidification of the phagocytic vacuole of host cells which restricts bacterial translocation from the vacuole to the cytosol. Required for the antibacterial activity of reactive oxygen species and nitric oxide. Its function is as follows. Pore-forming protein that plays a central role in antigen cross-presentation in dendritic cells by mediating delivery of antigens for cross-presentation. Dendritic cells bridge innate and adaptive immunity by capturing exogenous antigens on MHC class-I molecules and presenting them to naive CD8(+) T-cells. Acts by forming a pore in antigen-containing compartments, promoting the release of antigens into the cytosol, enabling generation of MHCI:peptide complexes and T-cell priming. The sequence is that of Macrophage-expressed gene 1 protein (Mpeg1) from Rattus norvegicus (Rat).